The chain runs to 441 residues: Chitinase-like protein Idgf3 (441 aa).

The signal sequence occupies residues 1-23 (MTGSLWLSLALSLAVLAQFKVSA). The GH18 domain occupies 25–441 (PNLVCFYDSQ…MLRAIKYRLL (417 aa)). Residues cysteine 29 and cysteine 56 are joined by a disulfide bond. The N-linked (GlcNAc...) asparagine glycan is linked to asparagine 221. The tract at residues 309-331 (SGDSGMPVVPSTQGPAPAGPQSK) is disordered. Residues cysteine 342 and cysteine 425 are joined by a disulfide bond.

The protein belongs to the glycosyl hydrolase 18 family. IDGF subfamily. In terms of processing, glycosylated.

The protein localises to the secreted. Cooperates with insulin-like peptides to stimulate the proliferation, polarization and motility of imaginal disk cells. May act by stabilizing the binding of insulin-like peptides to its receptor through a simultaneous interaction with both molecules to form a multiprotein signaling complex. The sequence is that of Chitinase-like protein Idgf3 (Idgf3) from Drosophila yakuba (Fruit fly).